The primary structure comprises 91 residues: Acylphosphatase (91 aa).

Residues 3–91 enclose the Acylphosphatase-like domain; it reads TVTMRVTGLV…EKFTRFSVVY (89 aa). Residues arginine 18 and asparagine 36 contribute to the active site.

This sequence belongs to the acylphosphatase family.

It catalyses the reaction an acyl phosphate + H2O = a carboxylate + phosphate + H(+). This chain is Acylphosphatase (acyP), found in Lactobacillus johnsonii (strain CNCM I-12250 / La1 / NCC 533).